The chain runs to 345 residues: Anthranilate phosphoribosyltransferase (345 aa).

Residues G84, 87 to 88 (GD), T92, 94 to 97 (NIST), 112 to 120 (KHGNRSVSS), and S124 each bind 5-phospho-alpha-D-ribose 1-diphosphate. Position 84 (G84) interacts with anthranilate. S96 provides a ligand contact to Mg(2+). Anthranilate is bound at residue N115. R170 contacts anthranilate. Residues D229 and E230 each coordinate Mg(2+).

It belongs to the anthranilate phosphoribosyltransferase family. As to quaternary structure, homodimer. Mg(2+) is required as a cofactor.

It catalyses the reaction N-(5-phospho-beta-D-ribosyl)anthranilate + diphosphate = 5-phospho-alpha-D-ribose 1-diphosphate + anthranilate. The protein operates within amino-acid biosynthesis; L-tryptophan biosynthesis; L-tryptophan from chorismate: step 2/5. Catalyzes the transfer of the phosphoribosyl group of 5-phosphorylribose-1-pyrophosphate (PRPP) to anthranilate to yield N-(5'-phosphoribosyl)-anthranilate (PRA). The sequence is that of Anthranilate phosphoribosyltransferase from Xanthomonas axonopodis pv. citri (strain 306).